Consider the following 93-residue polypeptide: Large ribosomal subunit protein bL31 (93 aa).

The interval 68–93 is disordered; that stretch reads GSADAAADEKKPDAKNNNKDNTSKED. Over residues 74–93 the composition is skewed to basic and acidic residues; sequence ADEKKPDAKNNNKDNTSKED.

This sequence belongs to the bacterial ribosomal protein bL31 family. Type A subfamily. As to quaternary structure, part of the 50S ribosomal subunit.

Binds the 23S rRNA. This chain is Large ribosomal subunit protein bL31, found in Prochlorococcus marinus (strain MIT 9313).